Here is a 177-residue protein sequence, read N- to C-terminus: ATP synthase subunit delta (177 aa).

This sequence belongs to the ATPase delta chain family. F-type ATPases have 2 components, F(1) - the catalytic core - and F(0) - the membrane proton channel. F(1) has five subunits: alpha(3), beta(3), gamma(1), delta(1), epsilon(1). F(0) has three main subunits: a(1), b(2) and c(10-14). The alpha and beta chains form an alternating ring which encloses part of the gamma chain. F(1) is attached to F(0) by a central stalk formed by the gamma and epsilon chains, while a peripheral stalk is formed by the delta and b chains.

It is found in the cell inner membrane. Functionally, f(1)F(0) ATP synthase produces ATP from ADP in the presence of a proton or sodium gradient. F-type ATPases consist of two structural domains, F(1) containing the extramembraneous catalytic core and F(0) containing the membrane proton channel, linked together by a central stalk and a peripheral stalk. During catalysis, ATP synthesis in the catalytic domain of F(1) is coupled via a rotary mechanism of the central stalk subunits to proton translocation. Its function is as follows. This protein is part of the stalk that links CF(0) to CF(1). It either transmits conformational changes from CF(0) to CF(1) or is implicated in proton conduction. This is ATP synthase subunit delta from Shigella flexneri.